Reading from the N-terminus, the 156-residue chain is Small ribosomal subunit protein uS7 (156 aa).

Belongs to the universal ribosomal protein uS7 family. As to quaternary structure, part of the 30S ribosomal subunit. Contacts proteins S9 and S11.

Its function is as follows. One of the primary rRNA binding proteins, it binds directly to 16S rRNA where it nucleates assembly of the head domain of the 30S subunit. Is located at the subunit interface close to the decoding center, probably blocks exit of the E-site tRNA. The sequence is that of Small ribosomal subunit protein uS7 from Pelotomaculum thermopropionicum (strain DSM 13744 / JCM 10971 / SI).